The primary structure comprises 260 residues: Phosphatidate cytidylyltransferase (260 aa).

A run of 7 helical transmembrane segments spans residues 9 to 29, 46 to 66, 70 to 90, 102 to 122, 130 to 150, 172 to 192, and 196 to 216; these read IIAL…LMLF, MIKF…IIML, AGEW…FIVL, FMDA…FMYF, LRYI…AYIF, FFGG…FVDL, and IWLL…GDLV.

Belongs to the CDS family.

It is found in the cell membrane. The enzyme catalyses a 1,2-diacyl-sn-glycero-3-phosphate + CTP + H(+) = a CDP-1,2-diacyl-sn-glycerol + diphosphate. It participates in phospholipid metabolism; CDP-diacylglycerol biosynthesis; CDP-diacylglycerol from sn-glycerol 3-phosphate: step 3/3. In Staphylococcus epidermidis (strain ATCC 35984 / DSM 28319 / BCRC 17069 / CCUG 31568 / BM 3577 / RP62A), this protein is Phosphatidate cytidylyltransferase (cdsA).